We begin with the raw amino-acid sequence, 229 residues long: Potassium/proton antiporter CemA (229 aa).

3 helical membrane passes run 7–27 (LTPF…SLSF), 106–126 (LILH…YSIL), and 193–213 (LVST…FLFL).

It belongs to the CemA family.

Its subcellular location is the plastid. It is found in the chloroplast inner membrane. It carries out the reaction K(+)(in) + H(+)(out) = K(+)(out) + H(+)(in). Its function is as follows. Contributes to K(+)/H(+) antiport activity by supporting proton efflux to control proton extrusion and homeostasis in chloroplasts in a light-dependent manner to modulate photosynthesis. Prevents excessive induction of non-photochemical quenching (NPQ) under continuous-light conditions. Indirectly promotes efficient inorganic carbon uptake into chloroplasts. The protein is Potassium/proton antiporter CemA of Illicium oligandrum (Star anise).